Consider the following 406-residue polypeptide: Purine nucleoside permease (406 aa).

A signal peptide spans 1 to 22 (MKLSTLFTLATTISTLTTFTIA).

This sequence belongs to the NUP family.

Mammalian nucleoside transport inhibitors dipyridamole and NBMPR inhibit adenosine transport by NUP. Its function is as follows. Nucleoside permease that transports adenosine and guanosine. Does not show any transport activities towards cytidine, adenine, guanine, uridine, and uracil. This chain is Purine nucleoside permease, found in Candida albicans (Yeast).